Reading from the N-terminus, the 64-residue chain is Large ribosomal subunit protein bL33m (64 aa).

This sequence belongs to the bacterial ribosomal protein bL33 family. Component of the mitochondrial ribosome large subunit (39S) which comprises a 16S rRNA and about 50 distinct proteins.

The protein resides in the mitochondrion. The chain is Large ribosomal subunit protein bL33m (mRpL33) from Drosophila melanogaster (Fruit fly).